The chain runs to 511 residues: Ribonuclease Y (511 aa).

A helical transmembrane segment spans residues 2–22; that stretch reads ITTVIIAIVCFAVGGGLSYML. Residues 201 to 261 form the KH domain; it reads SVTVFHIESD…VRREIARLAL (61 aa). One can recognise an HD domain in the interval 327–420; it reads LLQHARETAN…VQVCDAISGA (94 aa).

Belongs to the RNase Y family.

It localises to the cell membrane. Endoribonuclease that initiates mRNA decay. This chain is Ribonuclease Y, found in Phocaeicola vulgatus (strain ATCC 8482 / DSM 1447 / JCM 5826 / CCUG 4940 / NBRC 14291 / NCTC 11154) (Bacteroides vulgatus).